We begin with the raw amino-acid sequence, 291 residues long: ATP synthase gamma chain (291 aa).

The protein belongs to the ATPase gamma chain family. In terms of assembly, F-type ATPases have 2 components, CF(1) - the catalytic core - and CF(0) - the membrane proton channel. CF(1) has five subunits: alpha(3), beta(3), gamma(1), delta(1), epsilon(1). CF(0) has three main subunits: a, b and c.

The protein localises to the cell inner membrane. In terms of biological role, produces ATP from ADP in the presence of a proton gradient across the membrane. The gamma chain is believed to be important in regulating ATPase activity and the flow of protons through the CF(0) complex. This Neisseria meningitidis serogroup C / serotype 2a (strain ATCC 700532 / DSM 15464 / FAM18) protein is ATP synthase gamma chain.